An 874-amino-acid polypeptide reads, in one-letter code: Leucine--tRNA ligase (874 aa).

The 'HIGH' region signature appears at P47–H57. Positions K636–S640 match the 'KMSKS' region motif. K639 contributes to the ATP binding site.

The protein belongs to the class-I aminoacyl-tRNA synthetase family.

Its subcellular location is the cytoplasm. It catalyses the reaction tRNA(Leu) + L-leucine + ATP = L-leucyl-tRNA(Leu) + AMP + diphosphate. The polypeptide is Leucine--tRNA ligase (Acinetobacter baumannii (strain AB307-0294)).